A 277-amino-acid polypeptide reads, in one-letter code: Urease accessory protein UreD (277 aa).

The protein belongs to the UreD family. In terms of assembly, ureD, UreF and UreG form a complex that acts as a GTP-hydrolysis-dependent molecular chaperone, activating the urease apoprotein by helping to assemble the nickel containing metallocenter of UreC. The UreE protein probably delivers the nickel.

The protein localises to the cytoplasm. Its function is as follows. Required for maturation of urease via the functional incorporation of the urease nickel metallocenter. This Yersinia pestis bv. Antiqua (strain Antiqua) protein is Urease accessory protein UreD.